The sequence spans 575 residues: Proline--tRNA ligase (575 aa).

It belongs to the class-II aminoacyl-tRNA synthetase family. ProS type 1 subfamily. In terms of assembly, homodimer.

Its subcellular location is the cytoplasm. It catalyses the reaction tRNA(Pro) + L-proline + ATP = L-prolyl-tRNA(Pro) + AMP + diphosphate. Functionally, catalyzes the attachment of proline to tRNA(Pro) in a two-step reaction: proline is first activated by ATP to form Pro-AMP and then transferred to the acceptor end of tRNA(Pro). As ProRS can inadvertently accommodate and process non-cognate amino acids such as alanine and cysteine, to avoid such errors it has two additional distinct editing activities against alanine. One activity is designated as 'pretransfer' editing and involves the tRNA(Pro)-independent hydrolysis of activated Ala-AMP. The other activity is designated 'posttransfer' editing and involves deacylation of mischarged Ala-tRNA(Pro). The misacylated Cys-tRNA(Pro) is not edited by ProRS. In Saccharophagus degradans (strain 2-40 / ATCC 43961 / DSM 17024), this protein is Proline--tRNA ligase.